Consider the following 778-residue polypeptide: Endonuclease MutS2 (778 aa).

An ATP-binding site is contributed by 328–335; that stretch reads GPNTGGKT. A Smr domain is found at 702 to 777; sequence LDLRGKRYEE…GSGATIVTFK (76 aa).

Belongs to the DNA mismatch repair MutS family. MutS2 subfamily. In terms of assembly, homodimer. Binds to stalled ribosomes, contacting rRNA.

Its function is as follows. Endonuclease that is involved in the suppression of homologous recombination and thus may have a key role in the control of bacterial genetic diversity. Functionally, acts as a ribosome collision sensor, splitting the ribosome into its 2 subunits. Detects stalled/collided 70S ribosomes which it binds and splits by an ATP-hydrolysis driven conformational change. Acts upstream of the ribosome quality control system (RQC), a ribosome-associated complex that mediates the extraction of incompletely synthesized nascent chains from stalled ribosomes and their subsequent degradation. Probably generates substrates for RQC. The chain is Endonuclease MutS2 from Streptococcus pneumoniae (strain JJA).